A 576-amino-acid polypeptide reads, in one-letter code: Sulfite reductase [NADPH] hemoprotein beta-component (576 aa).

The [4Fe-4S] cluster site is built by C435, C441, C480, and C484. Residue C484 coordinates siroheme.

Belongs to the nitrite and sulfite reductase 4Fe-4S domain family. As to quaternary structure, alpha(8)-beta(8). The alpha component is a flavoprotein, the beta component is a hemoprotein. Requires siroheme as cofactor. It depends on [4Fe-4S] cluster as a cofactor.

It catalyses the reaction hydrogen sulfide + 3 NADP(+) + 3 H2O = sulfite + 3 NADPH + 4 H(+). Its pathway is sulfur metabolism; hydrogen sulfide biosynthesis; hydrogen sulfide from sulfite (NADPH route): step 1/1. Component of the sulfite reductase complex that catalyzes the 6-electron reduction of sulfite to sulfide. This is one of several activities required for the biosynthesis of L-cysteine from sulfate. This is Sulfite reductase [NADPH] hemoprotein beta-component from Proteus mirabilis (strain HI4320).